Here is a 132-residue protein sequence, read N- to C-terminus: Small ribosomal subunit protein uS8 (132 aa).

It belongs to the universal ribosomal protein uS8 family. Part of the 30S ribosomal subunit. Contacts proteins S5 and S12.

Functionally, one of the primary rRNA binding proteins, it binds directly to 16S rRNA central domain where it helps coordinate assembly of the platform of the 30S subunit. This chain is Small ribosomal subunit protein uS8, found in Streptococcus agalactiae serotype V (strain ATCC BAA-611 / 2603 V/R).